A 359-amino-acid polypeptide reads, in one-letter code: Alkanal monooxygenase alpha chain (359 aa).

Belongs to the bacterial luciferase oxidoreductase family. Heterodimer of an alpha and a beta chain.

The enzyme catalyses a long-chain fatty aldehyde + FMNH2 + O2 = a long-chain fatty acid + hnu + FMN + H2O + 2 H(+). Its function is as follows. Light-emitting reaction in luminous bacteria. The protein is Alkanal monooxygenase alpha chain (luxA) of Photorhabdus laumondii subsp. laumondii (strain DSM 15139 / CIP 105565 / TT01) (Photorhabdus luminescens subsp. laumondii).